The sequence spans 358 residues: Protein-glutamate methylesterase/protein-glutamine glutaminase 2 (358 aa).

A Response regulatory domain is found at 8–125 (RVLIVDDSAV…ARGLEGYAEE (118 aa)). Position 59 is a 4-aspartylphosphate (Asp59). A CheB-type methylesterase domain is found at 157 to 352 (PMPGSALRFR…LDRVAERLLA (196 aa)). Active-site residues include Ser177, His203, and Asp299.

The protein belongs to the CheB family. Post-translationally, phosphorylated by CheA. Phosphorylation of the N-terminal regulatory domain activates the methylesterase activity.

It localises to the cytoplasm. It carries out the reaction [protein]-L-glutamate 5-O-methyl ester + H2O = L-glutamyl-[protein] + methanol + H(+). It catalyses the reaction L-glutaminyl-[protein] + H2O = L-glutamyl-[protein] + NH4(+). Functionally, involved in chemotaxis. Part of a chemotaxis signal transduction system that modulates chemotaxis in response to various stimuli. Catalyzes the demethylation of specific methylglutamate residues introduced into the chemoreceptors (methyl-accepting chemotaxis proteins or MCP) by CheR. Also mediates the irreversible deamidation of specific glutamine residues to glutamic acid. The protein is Protein-glutamate methylesterase/protein-glutamine glutaminase 2 of Xanthomonas oryzae pv. oryzae (strain MAFF 311018).